A 451-amino-acid chain; its full sequence is Tubulin alpha-1A chain (451 aa).

Residues Gly10, Gln11, Ala12, and Gln15 each contribute to the GTP site. At Lys40 the chain carries N6-acetyllysine. GTP is bound by residues Glu71, Ala99, Ser140, Gly143, Gly144, Thr145, Gly146, Thr179, Glu183, Asn206, Tyr224, Asn228, and Leu252. Position 71 (Glu71) interacts with Mg(2+). Residue Glu254 is part of the active site. 3'-nitrotyrosine is present on Tyr282. A Phosphoserine modification is found at Ser439. 5-glutamyl polyglutamate is present on residues Glu443 and Glu445. Tyr451 carries the 3'-nitrotyrosine modification.

This sequence belongs to the tubulin family. As to quaternary structure, heterodimer of alpha- and beta-tubulin. A typical microtubule is a hollow water-filled tube with an outer diameter of 25 nm and an inner diameter of 15 nM. Alpha-beta heterodimers associate head-to-tail to form protofilaments running lengthwise along the microtubule wall with the beta-tubulin subunit facing the microtubule plus end conferring a structural polarity. Microtubules usually have 13 protofilaments but different protofilament numbers can be found in some organisms and specialized cells. Interacts with gamma-tubulin; the interaction allows microtubules to nucleate from the gamma-tubulin ring complex (gTuRC). Nascent microtubule interacts (via alpha-tubulin MREC motif) with TTC5/STRAP; this interaction may result in tubulin mRNA-targeted degradation. Component of sperm flagellar doublet microtubules. Mg(2+) is required as a cofactor. Post-translationally, some glutamate residues at the C-terminus are polyglycylated, resulting in polyglycine chains on the gamma-carboxyl group. Glycylation is mainly limited to tubulin incorporated into axonemes (cilia and flagella) whereas glutamylation is prevalent in neuronal cells, centrioles, axonemes, and the mitotic spindle. Both modifications can coexist on the same protein on adjacent residues, and lowering polyglycylation levels increases polyglutamylation, and reciprocally. Cilia and flagella glycylation is required for their stability and maintenance. Flagella glycylation controls sperm motility. Some glutamate residues at the C-terminus are polyglutamylated, resulting in polyglutamate chains on the gamma-carboxyl group. Polyglutamylation plays a key role in microtubule severing by spastin (SPAST). SPAST preferentially recognizes and acts on microtubules decorated with short polyglutamate tails: severing activity by SPAST increases as the number of glutamates per tubulin rises from one to eight, but decreases beyond this glutamylation threshold. Glutamylation is also involved in cilia motility. In terms of processing, acetylation of alpha chains at Lys-40 is located inside the microtubule lumen. This modification has been correlated with increased microtubule stability, intracellular transport and ciliary assembly. Post-translationally, methylation of alpha chains at Lys-40 is found in mitotic microtubules and is required for normal mitosis and cytokinesis contributing to genomic stability. Nitration of Tyr-451 is irreversible and interferes with normal dynein intracellular distribution. In terms of processing, undergoes a tyrosination/detyrosination cycle, the cyclic removal and re-addition of a C-terminal tyrosine residue by the enzymes tubulin tyrosine carboxypeptidase (MATCAP1, VASH1 or VASH2) and tubulin tyrosine ligase (TTL), respectively. Post-translationally, tyrosination promotes microtubule interaction with CAP-Gly domain-containing proteins such as CLIP1, CLIP2 and DCTN1. Tyrosination regulates the initiation of dynein-dynactin motility via interaction with DCTN1, which brings the dynein-dynactin complex into contact with microtubules. In neurons, tyrosinated tubulins mediate the initiation of retrograde vesicle transport. Detyrosination is involved in metaphase plate congression by guiding chromosomes during mitosis: detyrosination promotes interaction with CENPE, promoting pole-proximal transport of chromosomes toward the equator. Detyrosination increases microtubules-dependent mechanotransduction in dystrophic cardiac and skeletal muscle. In cardiomyocytes, detyrosinated microtubules are required to resist to contractile compression during contraction: detyrosination promotes association with desmin (DES) at force-generating sarcomeres, leading to buckled microtubules and mechanical resistance to contraction.

It is found in the cytoplasm. The protein resides in the cytoskeleton. The protein localises to the flagellum axoneme. The enzyme catalyses GTP + H2O = GDP + phosphate + H(+). Tubulin is the major constituent of microtubules, protein filaments consisting of alpha- and beta-tubulin heterodimers. Microtubules grow by the addition of GTP-tubulin dimers to the microtubule end, where a stabilizing cap forms. Below the cap, tubulin dimers are in GDP-bound state, owing to GTPase activity of alpha-tubulin. The protein is Tubulin alpha-1A chain (TUBA1A) of Sus scrofa (Pig).